We begin with the raw amino-acid sequence, 180 residues long: Probable DNA replication complex GINS protein PSF2 (180 aa).

It belongs to the GINS2/PSF2 family. Component of the GINS complex which is a heterotetramer of gins1, gins2, gins3 and gins4.

Its subcellular location is the nucleus. Its function is as follows. Required for correct functioning of the GINS complex, a complex that plays an essential role in the initiation of DNA replication, and progression of DNA replication forks. GINS complex is a core component of CDC45-MCM-GINS (CMG) helicase, the molecular machine that unwinds template DNA during replication, and around which the replisome is built. The sequence is that of Probable DNA replication complex GINS protein PSF2 (psf-2) from Caenorhabditis elegans.